The following is a 436-amino-acid chain: Trigger factor (436 aa).

A PPIase FKBP-type domain is found at 161 to 246; that stretch reads GDQVNIDFVG…VNSVAAPQLP (86 aa).

The protein belongs to the FKBP-type PPIase family. Tig subfamily.

Its subcellular location is the cytoplasm. It catalyses the reaction [protein]-peptidylproline (omega=180) = [protein]-peptidylproline (omega=0). Involved in protein export. Acts as a chaperone by maintaining the newly synthesized protein in an open conformation. Functions as a peptidyl-prolyl cis-trans isomerase. This is Trigger factor from Stutzerimonas stutzeri (strain A1501) (Pseudomonas stutzeri).